Consider the following 245-residue polypeptide: 1-(5-phosphoribosyl)-5-[(5-phosphoribosylamino)methylideneamino] imidazole-4-carboxamide isomerase (245 aa).

The Proton acceptor role is filled by D7. The active-site Proton donor is D129.

This sequence belongs to the HisA/HisF family.

It localises to the cytoplasm. It catalyses the reaction 1-(5-phospho-beta-D-ribosyl)-5-[(5-phospho-beta-D-ribosylamino)methylideneamino]imidazole-4-carboxamide = 5-[(5-phospho-1-deoxy-D-ribulos-1-ylimino)methylamino]-1-(5-phospho-beta-D-ribosyl)imidazole-4-carboxamide. It participates in amino-acid biosynthesis; L-histidine biosynthesis; L-histidine from 5-phospho-alpha-D-ribose 1-diphosphate: step 4/9. In Pectobacterium carotovorum subsp. carotovorum (strain PC1), this protein is 1-(5-phosphoribosyl)-5-[(5-phosphoribosylamino)methylideneamino] imidazole-4-carboxamide isomerase.